The primary structure comprises 177 residues: MFPILETDRLILRQITDQDAEAIFACFSNDEVTRYYGLENMESIEQAISMIQTFAALYQEKRGIRWGIERRDTKELIGTIGFHALAQKHRRAEIGYEIIPEHWRNGFASEVISKVVSYGFSALGLSRIGAVVFTDNEASNRLLLKMGFQKEGVLRQYMYQNGTPYDTNVYSIVKPRE.

Residues 10 to 177 (LILRQITDQD…NVYSIVKPRE (168 aa)) enclose the N-acetyltransferase domain.

This sequence belongs to the acetyltransferase family.

This is an uncharacterized protein from Bacillus subtilis (strain 168).